The sequence spans 299 residues: ATP phosphoribosyltransferase (299 aa).

Belongs to the ATP phosphoribosyltransferase family. Long subfamily. Requires Mg(2+) as cofactor.

It localises to the cytoplasm. The enzyme catalyses 1-(5-phospho-beta-D-ribosyl)-ATP + diphosphate = 5-phospho-alpha-D-ribose 1-diphosphate + ATP. The protein operates within amino-acid biosynthesis; L-histidine biosynthesis; L-histidine from 5-phospho-alpha-D-ribose 1-diphosphate: step 1/9. Its activity is regulated as follows. Feedback inhibited by histidine. Functionally, catalyzes the condensation of ATP and 5-phosphoribose 1-diphosphate to form N'-(5'-phosphoribosyl)-ATP (PR-ATP). Has a crucial role in the pathway because the rate of histidine biosynthesis seems to be controlled primarily by regulation of HisG enzymatic activity. This chain is ATP phosphoribosyltransferase, found in Shewanella oneidensis (strain ATCC 700550 / JCM 31522 / CIP 106686 / LMG 19005 / NCIMB 14063 / MR-1).